We begin with the raw amino-acid sequence, 312 residues long: tRNA U34 carboxymethyltransferase (312 aa).

Residues Lys88, Trp102, Lys107, Gly127, 149–151 (DPS), 177–178 (LD), Met191, Tyr195, and Arg304 each bind carboxy-S-adenosyl-L-methionine.

This sequence belongs to the class I-like SAM-binding methyltransferase superfamily. CmoB family. Homotetramer.

The enzyme catalyses carboxy-S-adenosyl-L-methionine + 5-hydroxyuridine(34) in tRNA = 5-carboxymethoxyuridine(34) in tRNA + S-adenosyl-L-homocysteine + H(+). Catalyzes carboxymethyl transfer from carboxy-S-adenosyl-L-methionine (Cx-SAM) to 5-hydroxyuridine (ho5U) to form 5-carboxymethoxyuridine (cmo5U) at position 34 in tRNAs. This chain is tRNA U34 carboxymethyltransferase, found in Dichelobacter nodosus (strain VCS1703A).